The primary structure comprises 1086 residues: 1,2-beta-oligoglucan phosphorylase (1086 aa).

The active-site Proton donor is aspartate 741.

It belongs to the glycosyl hydrolase 94 family. In terms of assembly, monomer.

It catalyses the reaction [(1-&gt;2)-beta-D-glucosyl](n) + phosphate = [(1-&gt;2)-beta-D-glucosyl](n-1) + alpha-D-glucose 1-phosphate. Its function is as follows. Catalyzes the reversible phosphorolysis of beta-(1-&gt;2)-D-glucans. The minimum length of the substrate for the phosphorolytic reaction is 3 D-glucose units. The protein is 1,2-beta-oligoglucan phosphorylase of Listeria innocua serovar 6a (strain ATCC BAA-680 / CLIP 11262).